We begin with the raw amino-acid sequence, 272 residues long: CD40 ligand (272 aa).

Residues 1–23 are Cytoplasmic-facing; the sequence is MNEAYSPAAPRPMGSTSPSTMKM. The helical; Signal-anchor for type II membrane protein transmembrane segment at 24–44 threads the bilayer; the sequence is FMCFLSVFMVVQTIGTVLFCL. The Extracellular segment spans residues 45-272; it reads YLHMKMDKME…GNTYFGMFKL (228 aa). N-linked (GlcNAc...) asparagine glycans are attached at residues asparagine 124 and asparagine 146. Residues 136 to 272 form the THD domain; sequence IATHLAGVKS…GNTYFGMFKL (137 aa). Cysteine 190 and cysteine 229 are joined by a disulfide. Residue asparagine 251 is glycosylated (N-linked (GlcNAc...) asparagine).

Belongs to the tumor necrosis factor family. As to quaternary structure, homotrimer. Interacts with CD28. CD40 ligand, soluble form: Exists as either a monomer or a homotrimer. Forms a ternary complex between CD40 and integrins for CD40-CD40LG signaling. Post-translationally, the soluble form derives from the membrane form by proteolytic processing.

The protein localises to the cell membrane. It is found in the cell surface. Its subcellular location is the secreted. In terms of biological role, cytokine that acts as a ligand to CD40/TNFRSF5. Costimulates T-cell proliferation and cytokine production. Induces the activation of NF-kappa-B. Mediates B-cell proliferation in the absence of co-stimulus as well as IgE production in the presence of IL4. Involved in immunoglobulin class switching. Functionally, acts as a ligand for integrins, specifically ITGA5:ITGB1 and ITGAV:ITGB3; both integrins and the CD40 receptor are required for activation of CD40-CD40LG signaling, which have cell-type dependent effects, such as B-cell activation, NF-kappa-B signaling and anti-apoptotic signaling. This is CD40 ligand (CD40LG) from Gallus gallus (Chicken).